Reading from the N-terminus, the 555-residue chain is Sesquiterpene synthase 31 (555 aa).

The Mg(2+) site is built by Asp-308, Asp-312, Asp-451, Thr-455, and Glu-459. The short motif at 308–312 (DDTFD) is the DDXXD motif element.

This sequence belongs to the terpene synthase family. Tpsa subfamily. It depends on Mg(2+) as a cofactor. Mn(2+) is required as a cofactor. As to expression, expressed in stem and leaf trichomes. Detected in roots, fruits and flowers.

It is found in the cytoplasm. The enzyme catalyses (2E,6E)-farnesyl diphosphate = viridiflorene + diphosphate. It participates in secondary metabolite biosynthesis; terpenoid biosynthesis. Sesquiterpene synthase involved in the production of viridiflorene from (E,E)-farnesyl diphosphate (FPP). Has no activity with (Z,Z)-FPP. Can act with a low efficiency as a monoterpene synthase with geranyl diphosphate as substrate. This is Sesquiterpene synthase 31 from Solanum lycopersicum (Tomato).